The primary structure comprises 296 residues: Small ribosomal subunit protein uS2m (296 aa).

The disordered stretch occupies residues 274-296 (QGQKEPGDQGPAHPPGADMSHSL).

Belongs to the universal ribosomal protein uS2 family. In terms of assembly, component of the mitochondrial small ribosomal subunit (mt-SSU). Mature mammalian 55S mitochondrial ribosomes consist of a small (28S) and a large (39S) subunit. The 28S small subunit contains a 12S ribosomal RNA (12S mt-rRNA) and 30 different proteins. The 39S large subunit contains a 16S rRNA (16S mt-rRNA), a copy of mitochondrial valine transfer RNA (mt-tRNA(Val)), which plays an integral structural role, and 52 different proteins.

The protein resides in the mitochondrion. Its function is as follows. Required for mitoribosome formation and stability, and mitochondrial translation. This chain is Small ribosomal subunit protein uS2m (MRPS2), found in Homo sapiens (Human).